An 827-amino-acid chain; its full sequence is Protein SEY1 (827 aa).

The interval 1–26 (MSQSSPSNAETDEDLSTTSSSSSFVP) is disordered. Residues 1–719 (MSQSSPSNAE…KRSIVQHVTQ (719 aa)) are Cytoplasmic-facing. One can recognise a GB1/RHD3-type G domain in the interval 63 to 291 (GNNYHIISVF…VKKDLFRPNY (229 aa)). GTP is bound at residue 73 to 80 (GSQSTGKS). 2 coiled-coil regions span residues 389–409 (KSVY…KFRE) and 472–492 (VSNL…VELK). Residues 720–740 (IPYYIYLVIMVLGWNEFMAIV) form a helical membrane-spanning segment. The Lumenal segment spans residues 741 to 743 (RNP). Residues 744 to 764 (LFFSLVLVFGAGLYILYSMNL) form a helical membrane-spanning segment. Residues 765–827 (LKPAMVVVQR…VVETIEMQDL (63 aa)) are Cytoplasmic-facing. Residues 803–823 (QKISASNREKVEEEKVVETIE) are a coiled coil.

It belongs to the TRAFAC class dynamin-like GTPase superfamily. GB1/RHD3 GTPase family. RHD3 subfamily.

The protein resides in the endoplasmic reticulum membrane. In terms of biological role, cooperates with the reticulon proteins and tubule-shaping DP1 family proteins to generate and maintain the structure of the tubular endoplasmic reticulum network. Has GTPase activity, which is required for its function in ER organization. This is Protein SEY1 from Scheffersomyces stipitis (strain ATCC 58785 / CBS 6054 / NBRC 10063 / NRRL Y-11545) (Yeast).